A 98-amino-acid chain; its full sequence is MSRNELDERIETYYVRVRGVVQGVGFRHATVREAHALKLRGWVANLEDGTVEAMIQGPGAQIDRMLAWLRHGPPAARVTEVTFEERRTEKRFERFQQQ.

The Acylphosphatase-like domain maps to 12-98 (TYYVRVRGVV…EKRFERFQQQ (87 aa)). Active-site residues include R27 and N45.

Belongs to the acylphosphatase family.

The enzyme catalyses an acyl phosphate + H2O = a carboxylate + phosphate + H(+). In Burkholderia cenocepacia (strain HI2424), this protein is Acylphosphatase (acyP).